The following is a 418-amino-acid chain: uncharacterized protein (418 aa).

Disordered regions lie at residues K123–K174, F209–E231, K258–L302, and K344–K418. Positions N136–I154 are enriched in basic and acidic residues. The span at D156–S170 shows a compositional bias: acidic residues. Residues F209–E227 show a composition bias toward basic and acidic residues. The segment covering N266–N293 has biased composition (low complexity). Positions K344–N356 are enriched in acidic residues. Polar residues predominate over residues D359–V374. Low complexity predominate over residues K375–R390. The span at K391–S401 shows a compositional bias: basic residues.

This is an uncharacterized protein from Dictyostelium discoideum (Social amoeba).